Consider the following 423-residue polypeptide: UPF0597 protein Emin_0811 (423 aa).

This sequence belongs to the UPF0597 family.

The protein is UPF0597 protein Emin_0811 of Elusimicrobium minutum (strain Pei191).